The chain runs to 126 residues: Non-specific lipid-transfer protein 13 (126 aa).

Residues 1–20 form the signal peptide; sequence MDTHTTKLVAISLLLLLVIS. Disulfide bonds link Cys36–Cys85, Cys46–Cys61, Cys62–Cys109, and Cys83–Cys123.

Belongs to the plant LTP family.

In terms of biological role, plant non-specific lipid-transfer proteins transfer phospholipids as well as galactolipids across membranes. May play a role in wax or cutin deposition in the cell walls of expanding epidermal cells and certain secretory tissues. The sequence is that of Non-specific lipid-transfer protein 13 (LTP13) from Arabidopsis thaliana (Mouse-ear cress).